We begin with the raw amino-acid sequence, 73 residues long: Translation initiation factor IF-1 (73 aa).

Positions 1–72 (MAKEDVIEVE…SRGRITYRYR (72 aa)) constitute an S1-like domain.

It belongs to the IF-1 family. In terms of assembly, component of the 30S ribosomal translation pre-initiation complex which assembles on the 30S ribosome in the order IF-2 and IF-3, IF-1 and N-formylmethionyl-tRNA(fMet); mRNA recruitment can occur at any time during PIC assembly.

It localises to the cytoplasm. In terms of biological role, one of the essential components for the initiation of protein synthesis. Stabilizes the binding of IF-2 and IF-3 on the 30S subunit to which N-formylmethionyl-tRNA(fMet) subsequently binds. Helps modulate mRNA selection, yielding the 30S pre-initiation complex (PIC). Upon addition of the 50S ribosomal subunit IF-1, IF-2 and IF-3 are released leaving the mature 70S translation initiation complex. The sequence is that of Translation initiation factor IF-1 from Rubrobacter xylanophilus (strain DSM 9941 / JCM 11954 / NBRC 16129 / PRD-1).